A 372-amino-acid polypeptide reads, in one-letter code: Glutamate 5-kinase (372 aa).

K14 contributes to the ATP binding site. 3 residues coordinate substrate: S54, D141, and N153. Residues 173–174 (TD) and 215–221 (TGGMLTK) contribute to the ATP site. One can recognise a PUA domain in the interval 280-358 (AGRLVLDDGA…RDIERLLGYV (79 aa)).

Belongs to the glutamate 5-kinase family.

It localises to the cytoplasm. The catalysed reaction is L-glutamate + ATP = L-glutamyl 5-phosphate + ADP. It participates in amino-acid biosynthesis; L-proline biosynthesis; L-glutamate 5-semialdehyde from L-glutamate: step 1/2. Functionally, catalyzes the transfer of a phosphate group to glutamate to form L-glutamate 5-phosphate. The protein is Glutamate 5-kinase of Laribacter hongkongensis (strain HLHK9).